We begin with the raw amino-acid sequence, 127 residues long: Single-stranded DNA-binding protein 2 (127 aa).

Positions 4–103 (INKVMLVGRC…ITINTIELLG (100 aa)) constitute an SSB domain. The interval 104 to 127 (SPRKEESTSTSAPNETQAVANANF) is disordered. The span at 111–127 (TSTSAPNETQAVANANF) shows a compositional bias: polar residues.

In terms of assembly, homotetramer.

This chain is Single-stranded DNA-binding protein 2 (ssb2), found in Nostoc sp. (strain PCC 7120 / SAG 25.82 / UTEX 2576).